A 342-amino-acid chain; its full sequence is Protein FDO1 (342 aa).

Disordered regions lie at residues 1–36, 57–76, and 299–322; these read MEEN…NGSD, MSPM…TLSV, and GRTI…GNRT. The segment covering 15–25 has biased composition (polar residues); that stretch reads ATWSNQMGSPE. Residues 308-319 are compositionally biased toward basic and acidic residues; that stretch reads NTKDESIQDSHG.

In terms of assembly, interacts with FKH1.

In concert with FKH1, plays a role in directionality of mating type switching by controlling which donor mating-type locus is inserted into MAT locus during mating type switching. The polypeptide is Protein FDO1 (Saccharomyces cerevisiae (strain ATCC 204508 / S288c) (Baker's yeast)).